The primary structure comprises 363 residues: Putative C-&gt;U-editing enzyme APOBEC-4 (363 aa).

The CMP/dCMP-type deaminase domain maps to 61–177 (PQTKHLTFYE…AWNREALRSL (117 aa)). His93 lines the Zn(2+) pocket. Glu95 serves as the catalytic Proton donor. Zn(2+) is bound by residues Cys127 and Cys134.

Belongs to the cytidine and deoxycytidylate deaminase family. Requires Zn(2+) as cofactor.

Its function is as follows. Putative C to U editing enzyme whose physiological substrate is not yet known. The chain is Putative C-&gt;U-editing enzyme APOBEC-4 (APOBEC4) from Macaca fascicularis (Crab-eating macaque).